The following is a 487-amino-acid chain: Cobyric acid synthase (487 aa).

One can recognise a GATase cobBQ-type domain in the interval 249-435 (GIDIAIVRLP…IHGIFDEGDF (187 aa)). C330 (nucleophile) is an active-site residue. H427 is an active-site residue.

The protein belongs to the CobB/CobQ family. CobQ subfamily.

It functions in the pathway cofactor biosynthesis; adenosylcobalamin biosynthesis. Functionally, catalyzes amidations at positions B, D, E, and G on adenosylcobyrinic A,C-diamide. NH(2) groups are provided by glutamine, and one molecule of ATP is hydrogenolyzed for each amidation. This chain is Cobyric acid synthase, found in Clostridium perfringens (strain ATCC 13124 / DSM 756 / JCM 1290 / NCIMB 6125 / NCTC 8237 / Type A).